We begin with the raw amino-acid sequence, 294 residues long: 4-hydroxy-tetrahydrodipicolinate synthase (294 aa).

Thr47 is a pyruvate binding site. Tyr135 serves as the catalytic Proton donor/acceptor. Lys163 acts as the Schiff-base intermediate with substrate in catalysis. Val205 is a binding site for pyruvate.

Belongs to the DapA family. In terms of assembly, homotetramer; dimer of dimers.

It is found in the cytoplasm. It catalyses the reaction L-aspartate 4-semialdehyde + pyruvate = (2S,4S)-4-hydroxy-2,3,4,5-tetrahydrodipicolinate + H2O + H(+). It participates in amino-acid biosynthesis; L-lysine biosynthesis via DAP pathway; (S)-tetrahydrodipicolinate from L-aspartate: step 3/4. Functionally, catalyzes the condensation of (S)-aspartate-beta-semialdehyde [(S)-ASA] and pyruvate to 4-hydroxy-tetrahydrodipicolinate (HTPA). The protein is 4-hydroxy-tetrahydrodipicolinate synthase of Rickettsia bellii (strain OSU 85-389).